A 396-amino-acid polypeptide reads, in one-letter code: Inhibitory POU protein (396 aa).

The POU-IV box signature appears at 86–95 (RAEALAAVDI). The 78-residue stretch at 222-299 (DTDTDPRELE…ILQAWLEEAE (78 aa)) folds into the POU-specific domain. A disordered region spans residues 302-328 (AKNKRRDPDAPSVLPAGEKKRKRTSIA). The segment at residues 320 to 377 (KKRKRTSIAAPEKRSLEAYFAVQPRPSGEKIAAIAEKLDLKKNVVRVWFCNQRQKQKR) is a DNA-binding region (homeobox; atypical).

Belongs to the POU transcription factor family. Class-4 subfamily. In terms of tissue distribution, coexpressed with vvl in overlapping subsets of neurons in the embryonic central nervous system. Expressed in olfactory neurons.

It localises to the nucleus. Functionally, modulates gene transcription; simultaneously generates both a specific activator and an inhibitor of gene transcription, capable of modulating two distinct regulatory programs during neural development. Has a role in olfactory behavior. The polypeptide is Inhibitory POU protein (acj6) (Drosophila melanogaster (Fruit fly)).